The primary structure comprises 391 residues: ATP phosphoribosyltransferase regulatory subunit (391 aa).

This sequence belongs to the class-II aminoacyl-tRNA synthetase family. HisZ subfamily. As to quaternary structure, heteromultimer composed of HisG and HisZ subunits.

Its subcellular location is the cytoplasm. It participates in amino-acid biosynthesis; L-histidine biosynthesis; L-histidine from 5-phospho-alpha-D-ribose 1-diphosphate: step 1/9. Functionally, required for the first step of histidine biosynthesis. May allow the feedback regulation of ATP phosphoribosyltransferase activity by histidine. The polypeptide is ATP phosphoribosyltransferase regulatory subunit (Bacillus pumilus (strain SAFR-032)).